The primary structure comprises 38 residues: Large ribosomal subunit protein bL36 (38 aa).

It belongs to the bacterial ribosomal protein bL36 family.

The protein is Large ribosomal subunit protein bL36 of Synechocystis sp. (strain ATCC 27184 / PCC 6803 / Kazusa).